Reading from the N-terminus, the 319-residue chain is Pantothenate kinase (319 aa).

97–104 (GSVAVGKS) is an ATP binding site.

It belongs to the prokaryotic pantothenate kinase family.

The protein resides in the cytoplasm. It catalyses the reaction (R)-pantothenate + ATP = (R)-4'-phosphopantothenate + ADP + H(+). It participates in cofactor biosynthesis; coenzyme A biosynthesis; CoA from (R)-pantothenate: step 1/5. This chain is Pantothenate kinase, found in Chelativorans sp. (strain BNC1).